Here is a 158-residue protein sequence, read N- to C-terminus: Small ribosomal subunit protein uS7 (158 aa).

It belongs to the universal ribosomal protein uS7 family. In terms of assembly, part of the 30S ribosomal subunit. Contacts proteins S9 and S11.

In terms of biological role, one of the primary rRNA binding proteins, it binds directly to 16S rRNA where it nucleates assembly of the head domain of the 30S subunit. Is located at the subunit interface close to the decoding center, probably blocks exit of the E-site tRNA. The chain is Small ribosomal subunit protein uS7 from Flavobacterium psychrophilum (strain ATCC 49511 / DSM 21280 / CIP 103535 / JIP02/86).